The chain runs to 145 residues: Maximins 3/H3 type 2 (145 aa).

An N-terminal signal peptide occupies residues 1-18 (MNFKYIVAVSFLIASAYA). Propeptides lie at residues 19–43 (RSVQNDEQSLSQRDVLEEEESLREI) and 74–124 (RTAE…KEKR). I144 is subject to Isoleucine amide.

Belongs to the bombinin family. In terms of tissue distribution, expressed by the skin glands.

It localises to the secreted. Functionally, maximin-3 shows antibacterial activity against both Gram-positive and Gram-negative bacteria. It also shows antimicrobial activity against the fungus C.albicans, but not against A.flavus nor P.uticale. It has little hemolytic activity. It possess a significant cytotoxicity against tumor cell lines. It possess a significant anti-HIV activity. It shows high spermicidal activity. Maximin-H3 shows antibacterial activity against both Gram-positive and Gram-negative bacteria. It also shows antimicrobial activity against the fungus C.albicans. Shows strong hemolytic activity. The polypeptide is Maximins 3/H3 type 2 (Bombina maxima (Giant fire-bellied toad)).